We begin with the raw amino-acid sequence, 204 residues long: Gellan lyase (204 aa).

In terms of assembly, multimer.

Its subcellular location is the secreted. It catalyses the reaction Eliminative cleavage of beta-D-glucopyranosyl-(1-&gt;4)-beta-D-glucopyranosyluronate bonds of gellan backbone releasing tetrasaccharides containing a 4-deoxy-4,5-unsaturated D-glucopyranosyluronic acid at the non-reducing end. The tetrasaccharide produced from deacetylated gellan is beta-D-4-deoxy-Delta(4)-GlcAp-(1-&gt;4)-beta-D-Glcp-(1-&gt;4)-alpha-L-Rhap-(1-&gt;3)-beta-D-Glcp.. Activity is stimulated by zinc, potassium, lithium, cobalt, sodium, calcium, iron, manganase, magnesium and mercury ions at a concentration of 1 mM, but inhibited by copper ions at a concentration of 1 mM. Activity is inhibited by potassium, sodium and magnesium ions at a concentration of 1 M. Activity is inhibited by urea, EDTA, dithiothreitol, p-CMB, PSF, natrium lauryl sulfate and N-bromosuccinimide. Its function is as follows. Cleaves the glycosidic bonds of gellan backbone and releases tetrasaccharide units of glucuronyl-glucosyl-rhamnosyl-glucose with unsaturated glucuronic acid at the non-reducing terminal. The enzyme is highly specific to the heteropolysaccharide gellan. The protein is Gellan lyase of Geobacillus stearothermophilus (Bacillus stearothermophilus).